Consider the following 952-residue polypeptide: Leucine--tRNA ligase (952 aa).

A 'HIGH' region motif is present at residues 66–77; it reads PYPSGAGLHVGH. The 'KMSKS' region signature appears at 722-726; sequence KMGKS. An ATP-binding site is contributed by K725.

It belongs to the class-I aminoacyl-tRNA synthetase family.

Its subcellular location is the cytoplasm. It catalyses the reaction tRNA(Leu) + L-leucine + ATP = L-leucyl-tRNA(Leu) + AMP + diphosphate. In Corynebacterium glutamicum (strain ATCC 13032 / DSM 20300 / JCM 1318 / BCRC 11384 / CCUG 27702 / LMG 3730 / NBRC 12168 / NCIMB 10025 / NRRL B-2784 / 534), this protein is Leucine--tRNA ligase.